The sequence spans 1372 residues: Collagen alpha-2(I) chain (1372 aa).

An N-terminal signal peptide occupies residues 1 to 22 (MLSFVDTRTLLLLAVTSCLATC). A Pyrrolidone carboxylic acid modification is found at Gln23. The propeptide at 23–85 (QYLQSGSVRK…PPGLTGNFAA (63 aa)) is N-terminal propeptide. The disordered stretch occupies residues 28 to 1135 (GSVRKGPTGD…DQPRSQPSLR (1108 aa)). The segment covering 59–77 (MGPPGPPGSPGPPGSPAPP) has biased composition (pro residues). Lys90 carries the allysine modification. Over residues 95 to 146 (GPGPMGLMGPRGPPGAVGAPGPQGFQGPAGEPGEPGQTGPAGPRGPAGSPGK) the composition is skewed to low complexity. Residues 147-161 (AGEDGHPGKPGRPGE) show a composition bias toward basic and acidic residues. Lys183 is subject to 5-hydroxylysine; alternate. Residue Lys183 is glycosylated (O-linked (Gal...) hydroxylysine; alternate). Composition is skewed to low complexity over residues 231–260 (VGAPGPAGARGSDGSVGPVGPAGPIGSAGP), 285–299 (AGPRGEVGLPGLSGP), 306–327 (PGTNGLTGAKGATGLPGVAGAP), 336–351 (PGPAGAAGATGARGLV), 390–416 (PGEAGSAGPAGPPGLRGSPGSRGLPGA), 476–495 (LPGIDGRPGPIGPAGPRGEA), and 519–537 (PGLAGARGAPGPDGNNGAQ). Residues 544–553 (GVQGGKGEQG) are compositionally biased toward gly residues. Residues 600-639 (PGESGAAGPSGPIGSRGPSGAPGPDGNKGEAGAVGAPGSA) are compositionally biased toward low complexity. Residues 640 to 649 (GASGPGGLPG) show a composition bias toward gly residues. Low complexity-rich tracts occupy residues 681–716 (RGIPGAVGAPGPAGASGDRGEAGAAGPSGPAGPRGS) and 725–743 (PAGPNGFAGPAGAAGQPGA). Residues 744–753 (KGEKGTKGPK) are compositionally biased toward basic and acidic residues. The segment covering 755–771 (ENGIVGPTGSVGAAGPS) has biased composition (low complexity). Residues 781–790 (GSRGDGGPPG) show a composition bias toward gly residues. 5 stretches are compositionally biased toward low complexity: residues 792 to 801 (TGFPGAAGRT), 855 to 882 (SGEPGTAGAPGTAGPQGLLGAPGILGLP), 905 to 927 (ISGPPGARGPPGAVGSPGVNGAP), 957 to 978 (PGSIGPTGAAGAPGPHGSVGPA), and 987 to 1007 (PGPAGSVGPVGAVGPRGPSGP). Over residues 1011–1022 (RGDKGEPGDKGH) the composition is skewed to basic and acidic residues. The span at 1095–1107 (AGPPGPPGPPGPP) shows a compositional bias: pro residues. A propeptide spans 1126-1372 (DQPRSQPSLR…RVEVGPVCFK (247 aa)) (C-terminal propeptide). Residues 1139-1372 (YEVDATLKSL…RVEVGPVCFK (234 aa)) form the Fibrillar collagen NC1 domain. 3 disulfide bridges follow: Cys1169-Cys1201, Cys1209-Cys1370, and Cys1278-Cys1323. Residues Asp1187, Asn1189, Gln1190, Cys1192, and Asp1195 each coordinate Ca(2+). An N-linked (GlcNAc...) asparagine glycan is attached at Asn1273.

Belongs to the fibrillar collagen family. As to quaternary structure, trimers of one alpha 2(I) and two alpha 1(I) chains. Interacts (via C-terminus) with TMEM131 (via PapD-L domain); the interaction is direct and is involved in assembly and TRAPPIII ER-to-Golgi transport complex-dependent secretion of collagen. Post-translationally, prolines at the third position of the tripeptide repeating unit (G-X-Y) are hydroxylated in some or all of the chains. Expressed in kidney glomeruli.

The protein localises to the secreted. It is found in the extracellular space. The protein resides in the extracellular matrix. In terms of biological role, type I collagen is a member of group I collagen (fibrillar forming collagen). The chain is Collagen alpha-2(I) chain (Col1a2) from Mus musculus (Mouse).